The chain runs to 429 residues: Methylenetetrahydrofolate--tRNA-(uracil-5-)-methyltransferase TrmFO (429 aa).

7 to 12 is a binding site for FAD; the sequence is GAGLAG.

Belongs to the MnmG family. TrmFO subfamily. The cofactor is FAD.

It localises to the cytoplasm. It carries out the reaction uridine(54) in tRNA + (6R)-5,10-methylene-5,6,7,8-tetrahydrofolate + NADH + H(+) = 5-methyluridine(54) in tRNA + (6S)-5,6,7,8-tetrahydrofolate + NAD(+). The enzyme catalyses uridine(54) in tRNA + (6R)-5,10-methylene-5,6,7,8-tetrahydrofolate + NADPH + H(+) = 5-methyluridine(54) in tRNA + (6S)-5,6,7,8-tetrahydrofolate + NADP(+). Catalyzes the folate-dependent formation of 5-methyl-uridine at position 54 (M-5-U54) in all tRNAs. This is Methylenetetrahydrofolate--tRNA-(uracil-5-)-methyltransferase TrmFO from Thermosipho africanus (strain TCF52B).